The chain runs to 259 residues: Phosphatidylinositol transfer protein 2 (259 aa).

A coiled-coil region spans residues 231–259; that stretch reads LTIEDIRKIEEETKAELAKKLEENKAANK.

The protein belongs to the PtdIns transfer protein family. PI transfer class IIA subfamily.

The protein localises to the cytoplasm. Its subcellular location is the golgi apparatus. In terms of biological role, catalyzes the transfer of PtdIns and phosphatidylcholine between membranes. In Dictyostelium discoideum (Social amoeba), this protein is Phosphatidylinositol transfer protein 2 (pitB).